Consider the following 725-residue polypeptide: MEIEKSNNGGSNPSAGEEFKDMIKGVTKFLMMVIFLGTIMLWIMMPTLTYRTKWLPHLRIKFGTSTYFGATGTTLFMYMFPMMVVACLGCVYLHFKNRKSPHHIDRETKGGVWSKLRKPMLVKGPLGIVSVTEITFLAMFVALLLWCFITYLRNSFATITPKSAAAHDESLWQAKLESAALRLGLIGNICLAFLFLPVARGSSLLPAMGLTSESSIKYHIWLGHMVMALFTVHGLCYIIYWASMHEISQMIMWDTKGVSNLAGEIALAAGLVMWATTYPKIRRRFFEVFFYTHYLYIVFMLFFVLHVGISFSFIALPGFYIFLVDRFLRFLQSRENVRLLAARILPSDTMELTFSKNSKLVYSPTSIMFVNIPSISKLQWHPFTITSSSKLEPEKLSIVIKKEGKWSTKLHQRLSSSDQIDRLAVSVEGPYGPASADFLRHEALVMVCGGSGITPFISVIRDLIATSQKETCKIPKITLICAFKKSSEISMLDLVLPLSGLETELSSDINIKIEAFITRDNDAGDEAKAGKIKTLWFKPSLSDQSISSILGPNSWLWLGAILASSFLIFMIIIGIITRYYIYPIDHNTNKIYSLTSKTIIYILVISVSIMATCSAAMLWNKKKYGKVESKQVQNVDRPSPTSSPTSSWGYNSLREIESTPQESLVQRTNLHFGERPNLKKLLLDVEGSSVGVLVCGPKKMRQKVAEICSSGLAENLHFESISFSW.

Residues 1-28 (MEIEKSNNGGSNPSAGEEFKDMIKGVTK) lie on the Cytoplasmic side of the membrane. The chain crosses the membrane as a helical span at residues 29-48 (FLMMVIFLGTIMLWIMMPTL). The Extracellular portion of the chain corresponds to 49 to 74 (TYRTKWLPHLRIKFGTSTYFGATGTT). Residues 75–93 (LFMYMFPMMVVACLGCVYL) form a helical membrane-spanning segment. The Cytoplasmic portion of the chain corresponds to 94–125 (HFKNRKSPHHIDRETKGGVWSKLRKPMLVKGP). The chain crosses the membrane as a helical span at residues 126-149 (LGIVSVTEITFLAMFVALLLWCFI). Topologically, residues 150 to 217 (TYLRNSFATI…MGLTSESSIK (68 aa)) are extracellular. The 121-residue stretch at 183-303 (LGLIGNICLA…YLYIVFMLFF (121 aa)) folds into the Ferric oxidoreductase domain. Residues 218–241 (YHIWLGHMVMALFTVHGLCYIIYW) form a helical membrane-spanning segment. Residues H219 and H233 each contribute to the heme site. Topologically, residues 242 to 291 (ASMHEISQMIMWDTKGVSNLAGEIALAAGLVMWATTYPKIRRRFFEVFFY) are cytoplasmic. Residues 292–316 (THYLYIVFMLFFVLHVGISFSFIAL) form a helical membrane-spanning segment. Heme is bound by residues H293 and H306. Over 317–338 (PGFYIFLVDRFLRFLQSRENVR) the chain is Extracellular. The FAD-binding FR-type domain occupies 332–437 (QSRENVRLLA…EGPYGPASAD (106 aa)). The chain crosses the membrane as a helical span at residues 339–359 (LLAARILPSDTMELTFSKNSK). The Cytoplasmic segment spans residues 360-554 (LVYSPTSIMF…SISSILGPNS (195 aa)). 381–384 (HPFT) serves as a coordination point for FAD. Residue 429 to 432 (GPYG) coordinates NAD(+). Residues 555 to 577 (WLWLGAILASSFLIFMIIIGIIT) form a helical membrane-spanning segment. Over 578–597 (RYYIYPIDHNTNKIYSLTSK) the chain is Extracellular. A helical membrane pass occupies residues 598–619 (TIIYILVISVSIMATCSAAMLW). The Cytoplasmic portion of the chain corresponds to 620-725 (NKKKYGKVES…LHFESISFSW (106 aa)).

Belongs to the ferric reductase (FRE) family. Requires FAD as cofactor. Expressed in the epidermal cells of the roots. High expression in lateral roots and root hairs. Detected in leaves, stems, siliques and in flowers in anthers and styles.

The protein localises to the cell membrane. The catalysed reaction is 2 a Fe(II)-siderophore + NAD(+) + H(+) = 2 a Fe(III)-siderophore + NADH. Functionally, flavocytochrome that transfers electrons across the plasma membrane to reduce ferric iron chelates to form soluble ferrous iron in the rhizosphere. May be involved in the delivery of iron to developing pollen grains. Also acts as a copper-chelate reductase. Involved in glycine betaine-mediated chilling tolerance and reactive oxygen species accumulation. This chain is Ferric reduction oxidase 2 (FRO2), found in Arabidopsis thaliana (Mouse-ear cress).